We begin with the raw amino-acid sequence, 95 residues long: Small ribosomal subunit protein bS18 (95 aa).

It belongs to the bacterial ribosomal protein bS18 family. In terms of assembly, part of the 30S ribosomal subunit. Forms a tight heterodimer with protein bS6.

Functionally, binds as a heterodimer with protein bS6 to the central domain of the 16S rRNA, where it helps stabilize the platform of the 30S subunit. The sequence is that of Small ribosomal subunit protein bS18 from Rickettsia prowazekii (strain Madrid E).